The primary structure comprises 85 residues: U4-theraphotoxin-Hhn1s (85 aa).

An N-terminal signal peptide occupies residues M1 to A22. Positions E23–R48 are excised as a propeptide. Intrachain disulfides connect C52-C66, C56-C77, and C71-C82.

This sequence belongs to the neurotoxin 12 (Hwtx-2) family. 02 (Hwtx-2) subfamily. Expressed by the venom gland.

Its subcellular location is the secreted. Postsynaptic neurotoxin. This is U4-theraphotoxin-Hhn1s from Cyriopagopus hainanus (Chinese bird spider).